Consider the following 90-residue polypeptide: Small ribosomal subunit protein uS17 (90 aa).

This sequence belongs to the universal ribosomal protein uS17 family. As to quaternary structure, part of the 30S ribosomal subunit.

In terms of biological role, one of the primary rRNA binding proteins, it binds specifically to the 5'-end of 16S ribosomal RNA. This chain is Small ribosomal subunit protein uS17, found in Burkholderia mallei (strain NCTC 10247).